A 124-amino-acid polypeptide reads, in one-letter code: Probable glycine cleavage system H protein (124 aa).

The Lipoyl-binding domain occupies 25 to 106 (TATIGITDYA…PYGSWLVKMA (82 aa)). K66 is subject to N6-lipoyllysine.

It belongs to the GcvH family. In terms of assembly, the glycine cleavage system is composed of four proteins: P, T, L and H. (R)-lipoate serves as cofactor.

The glycine cleavage system catalyzes the degradation of glycine. The H protein shuttles the methylamine group of glycine from the P protein to the T protein. In Thermoplasma acidophilum (strain ATCC 25905 / DSM 1728 / JCM 9062 / NBRC 15155 / AMRC-C165), this protein is Probable glycine cleavage system H protein.